We begin with the raw amino-acid sequence, 247 residues long: ATP synthase subunit a, chloroplastic (247 aa).

5 consecutive transmembrane segments (helical) span residues 38–58, 95–115, 134–154, 199–219, and 220–240; these read QVLI…SIAV, VPFI…GALL, INTT…AGLT, LVVV…VMFL, and GLFT…AYIG.

The protein belongs to the ATPase A chain family. As to quaternary structure, F-type ATPases have 2 components, CF(1) - the catalytic core - and CF(0) - the membrane proton channel. CF(1) has five subunits: alpha(3), beta(3), gamma(1), delta(1), epsilon(1). CF(0) has four main subunits: a, b, b' and c.

Its subcellular location is the plastid. It is found in the chloroplast thylakoid membrane. Functionally, key component of the proton channel; it plays a direct role in the translocation of protons across the membrane. The chain is ATP synthase subunit a, chloroplastic from Eucalyptus globulus subsp. globulus (Tasmanian blue gum).